Here is a 379-residue protein sequence, read N- to C-terminus: MATAGKVIKCKAAVAWEAGKPLTMEEVEVAPPQAMEVRVKILFTSLCHTDVYFWEAKGQIPMFPRIFGHEAGGIVESVGEGVTDVAPGDHVLPVFTGECKECPHCKSAESNMCDLLRINTDRGVMIGDGKSRFSIGGKPIYHFVGTSTFSEYTVMHVGCVAKINPEAPLDKVCVLSCGISTGLGASINVAKPPKGSTVAIFGLGAVGLAAAEGARIAGASRIIGVDLNAVRFEEARKFGCTEFVNPKDHTKPVQQVLADMTNGGVDRSVECTGNVNAMIQAFECVHDGWGVAVLVGVPHKDAEFKTHPMNFLNERTLKGTFFGNFKPRTDLPNVVEMYMKKELEVEKFITHSVPFSEINTAFDLMAKGEGIRCIIRMDN.

Residues Cys-47, Thr-49, His-69, Cys-99, Cys-102, Cys-105, Cys-113, and Cys-177 each coordinate Zn(2+). Positions 49 and 69 each coordinate an alcohol. Thr-49 provides a ligand contact to NAD(+). Residues 202–207 (GLGAVG), Asp-226, Arg-231, Thr-272, Val-295, 295–297 (VGV), Phe-322, and Arg-372 each bind NAD(+).

The protein belongs to the zinc-containing alcohol dehydrogenase family. In terms of assembly, homodimer. It depends on Zn(2+) as a cofactor.

The protein resides in the cytoplasm. The enzyme catalyses a primary alcohol + NAD(+) = an aldehyde + NADH + H(+). It carries out the reaction a secondary alcohol + NAD(+) = a ketone + NADH + H(+). The protein is Alcohol dehydrogenase 1 (ADH1) of Hordeum vulgare (Barley).